We begin with the raw amino-acid sequence, 415 residues long: MGDDGPGSTVHLLCLAASSGVPLFCRSSSGGAPSRQQLPFSVIGSLNGVHMFGQNLDVQLNSARTEDTTVVWKNFHDSITLIALSSEEGTSELKLERMLHMVFGAMVLIVGLEELTNIRNVERLKKELRASYCLIDSFLGNSELIGDLTQCVDCVIPPEGSVMQETLSGFAEATGTAFVSLLVSGRVVAATDGWWRLGMPEAVLLPWLVGSLPPQAARDYPVYLPHGSPTVPHRLLTLTLLRGLELCLLCGPRPPLGELDPQLLERWWQPLLEPLRACLPLGPRALPDGFPLHSDILGLLLLHLELRRCLFTVEPSKDKEPSPEQRRRLLRNFYTLVATTHFPPEPGPAEKQEDTVHPAQTPRACYLVLGPGMGWQLVAVQLGLRLLLLMLSPQTPTHGLRSLATHTLQALTPLL.

This sequence belongs to the fuzzy family. Component of the CPLANE (ciliogenesis and planar polarity effectors) complex, composed of INTU, FUZ and WDPCP. Interacts with CPLANE1 and CPLANE2.

Its subcellular location is the cytoplasm. It is found in the cytoskeleton. The protein localises to the cilium basal body. In terms of biological role, probable planar cell polarity effector involved in cilium biogenesis. Proposed to function as core component of the CPLANE (ciliogenesis and planar polarity effectors) complex involved in the recruitment of peripheral IFT-A proteins to basal bodies. May regulate protein and membrane transport to the cilium. May regulate the morphogenesis of hair follicles which depends on functional primary cilia. Binds phosphatidylinositol 3-phosphate with highest affinity, followed by phosphatidylinositol 4-phosphate and phosphatidylinositol 5-phosphate. This Rattus norvegicus (Rat) protein is Protein fuzzy homolog (Fuz).